Consider the following 367-residue polypeptide: Protein SUPPRESSOR OF FRI 4 (367 aa).

A BED-type zinc finger spans residues 7 to 66 (RATEKVWCYYCDREFDDEKILVQHQKAKHFKCHVCHKKLSTASGMVIHVLQVHKENVTKV). Zn(2+)-binding residues include C38, C41, H54, and H59. Residues 246 to 309 (PFSAPLPVGG…PPVIANKAPS (64 aa)) form a disordered region. Residues 273–295 (PNNSIPGGTNAHSYASGPNTSGP) show a composition bias toward polar residues.

As to quaternary structure, homodimer. Component of the transcription activator complex FRI-C composed of FRI, FRL1, SUF4, FLX and FES1. Interacts with LD, ASHH2, FRL1, (via C-terminus) with FRI (via C-terminus), and with SWC6, a component of the SWR1 chromatin-remodeling complex. Binds to MED18 to regulate flowering time; recruits MED18 to FLC promoter. As to expression, expressed in root, shoot apex, leaves, stem and flowers. Expressed in expanding leaves, in the vasculature of fully expanded leaves, in the inflorescence, throughout young floral primordia, in the carpels of older flowers and in fertilized ovules.

It is found in the nucleus. Its function is as follows. Sequence-specific DNA binding factor that recognizes the 5'-CCAAATTTTAAGTTT-3' sequence. Recruits the FRI-C complex to the FLC promoter. Required for FRI-mediated FLC activation, but has no effect on the expression of MAF1, MAF2, MAF3, MAF5, UFC and CO. Dispensable for the reactivation of FLC in early embryogenesis, but required to maintain high levels of FLC expression in later embryonic and vegetative development. This is Protein SUPPRESSOR OF FRI 4 from Arabidopsis thaliana (Mouse-ear cress).